The following is a 3387-amino-acid chain: Genome polyprotein (3387 aa).

Residues 1-100 lie on the Cytoplasmic side of the membrane; that stretch reads MNQRKKVVRP…LNILNGRKRS (100 aa). The segment at 36–71 is hydrophobic; homodimerization of capsid protein C; that stretch reads LFSGKGPLRMVLAFITFLRVLSIPPTAGILKRWGQL. Positions 100 to 113 are cleaved as a propeptide — ER anchor for the capsid protein C, removed in mature form by serine protease NS3; it reads STITLLCLIPTVMA. The helical transmembrane segment at 101–117 threads the bilayer; that stretch reads TITLLCLIPTVMAFSLS. Residues 118-237 are Extracellular-facing; it reads TRDGEPLMIV…GAWKHAQRVE (120 aa). N182 is a glycosylation site (N-linked (GlcNAc...) asparagine; by host). Residues 238–258 form a helical membrane-spanning segment; it reads SWILRNPGFALLAGFMAYMIG. The Cytoplasmic segment spans residues 259–265; the sequence is QTGIQRT. Residues 266–279 traverse the membrane as a helical segment; sequence VFFVLMMLVAPSYG. The Extracellular portion of the chain corresponds to 280–725; sequence MRCVGVGNRD…HQVFGSVYTT (446 aa). 4 disulfides stabilise this stretch: C282–C309, C339–C400, C353–C384, and C371–C395. The N-linked (GlcNAc...) asparagine; by host glycan is linked to N346. Residues 377–390 form a fusion peptide region; that stretch reads DRGWGNGCGLFGKG. The N-linked (GlcNAc...) asparagine; by host glycan is linked to N432. 2 disulfides stabilise this stretch: C464–C564 and C581–C612. A helical transmembrane segment spans residues 726-746; it reads MFGGVSWMIRILIGFLVLWIG. Residues 747–751 are Cytoplasmic-facing; sequence TNSRN. A helical membrane pass occupies residues 752–772; it reads TSMAMTCIAVGGITLFLGFTV. The Extracellular portion of the chain corresponds to 773-1194; sequence QADMGCVASW…MLGDTMSGRI (422 aa). Disulfide bonds link C778/C789, C829/C917, C953/C997, C1054/C1103, C1065/C1087, and C1086/C1090. N904 and N981 each carry an N-linked (GlcNAc...) asparagine; by host glycan. The chain crosses the membrane as a helical span at residues 1195 to 1218; it reads GGQIHLAIMAVFKMSPGYVLGVFL. Residues 1219-1224 lie on the Lumenal side of the membrane; the sequence is RKLTSR. A helical transmembrane segment spans residues 1225–1243; the sequence is ETALMVIGMAMTTVLSIPH. Topologically, residues 1244-1267 are cytoplasmic; the sequence is DLMELIDGISLGLILLKIVTQFDN. A helical transmembrane segment spans residues 1268–1288; that stretch reads TQVGTLALSLTFIRSTMPLVM. Position 1289 (A1289) is a topological domain, lumenal. The helical transmembrane segment at 1290-1308 threads the bilayer; it reads WRTIMAVLFVVTLIPLCRT. Over 1309-1316 the chain is Lumenal; it reads SCLQKQSH. A helical membrane pass occupies residues 1317 to 1337; it reads WVEITALILGAQALPVYLMTL. Residues 1338 to 1345 are Cytoplasmic-facing; it reads MKGASRRS. A helical membrane pass occupies residues 1346–1366; the sequence is WPLNEGIMAVGLVSLLGSALL. Residues 1367-1369 are Lumenal-facing; it reads KND. The chain crosses the membrane as a helical span at residues 1370–1390; sequence VPLAGPMVAGGLLLAAYVMSG. Over 1391 to 1437 the chain is Cytoplasmic; sequence SSADLSLEKAANVQWDEMADITGSSPIIEVKQDEDGSFSIRDVEETN. Positions 1397 to 1436 are interacts with and activates NS3 protease; the sequence is LEKAANVQWDEMADITGSSPIIEVKQDEDGSFSIRDVEET. An intramembrane region (helical) is located at residues 1438–1458; that stretch reads MITLLVKLALITVSGLYPLAI. Residues 1459-2143 are Cytoplasmic-facing; the sequence is PVTMTLWYMW…QHALNELPES (685 aa). In terms of domain architecture, Peptidase S7 spans 1475–1652; it reads SGALWDVPSP…ERIGEPDYEV (178 aa). Active-site charge relay system; for serine protease NS3 activity residues include H1525, D1549, and S1609. A Helicase ATP-binding domain is found at 1654-1810; the sequence is EDIFRKKRLT…QSNSPIEDIE (157 aa). Residues 1658-1661 are important for RNA-binding; sequence RKKR. 1667-1674 lines the ATP pocket; it reads LHPGAGKT. The DEAH box motif lies at 1758–1761; it reads DEAH. Positions 1820-1987 constitute a Helicase C-terminal domain; that stretch reads TGFDWITDYQ…IIPTLFGPER (168 aa). The residue at position 1862 (K1862) is an N6-acetyllysine; by host. Residues 2144-2164 form a helical membrane-spanning segment; it reads LETLMLVALLGAMTAGIFLFF. Over 2165–2169 the chain is Lumenal; that stretch reads MQGKG. The helical intramembrane region spans 2170–2190; it reads IGKLSMGLITIAVASGLLWVA. Position 2191 (E2191) is a topological domain, lumenal. Residues 2192 to 2212 traverse the membrane as a helical segment; that stretch reads IQPQWIAASIILEFFLMVLLI. Over 2213-2225 the chain is Cytoplasmic; that stretch reads PEPEKQRTPQDNQ. The helical transmembrane segment at 2226-2246 threads the bilayer; it reads LIYVILTILTIIGLIAANEMG. The Lumenal segment spans residues 2247 to 2270; that stretch reads LIEKTKTDFGFYQVKTETTILDVD. The helical intramembrane region spans 2271–2291; sequence LRPASAWTLYAVATTILTPML. Over 2292–2301 the chain is Lumenal; that stretch reads RHTIENTSAN. N2297 and N2301 each carry an N-linked (GlcNAc...) asparagine; by host glycan. The helical intramembrane region spans 2302–2322; it reads LSLAAIANQAAVLMGLGKGWP. Topologically, residues 2323–2343 are lumenal; the sequence is LHRMDLGVPLLAMGCYSQVNP. Residues 2344-2364 form a helical membrane-spanning segment; the sequence is TTLTASLVMLLVHYAIIGPGL. Over 2365–2409 the chain is Cytoplasmic; that stretch reads QAKATREAQKRTAAGIMKNPTVDGITVIDLEPISYDPKFEKQLGQ. The helical transmembrane segment at 2410–2430 threads the bilayer; that stretch reads VMLLVLCAGQLLLMRTTWAFC. Residues 2431–2455 are Lumenal-facing; sequence EVLTLATGPILTLWEGNPGRFWNTT. N2453 carries an N-linked (GlcNAc...) asparagine; by host glycan. Residues 2456–2476 form a helical membrane-spanning segment; it reads IAVSTANIFRGSYLAGAGLAF. The Cytoplasmic portion of the chain corresponds to 2477–3387; the sequence is SLIKNAQTPR…SAPSESEGVL (911 aa). An mRNA cap 0-1 NS5-type MT domain is found at 2489-2751; it reads TGTTGETLGE…DVDLGAGTRS (263 aa). S2543 lines the S-adenosyl-L-methionine pocket. S2543 bears the Phosphoserine mark. K2548 (for 2'-O-MTase activity) is an active-site residue. The SUMO-interacting motif motif lies at 2564–2567; sequence VVDL. 6 residues coordinate S-adenosyl-L-methionine: G2573, W2574, T2591, K2592, D2618, and V2619. Catalysis depends on D2633, which acts as the For 2'-O-MTase activity. I2634 lines the S-adenosyl-L-methionine pocket. Active-site for 2'-O-MTase activity residues include K2668 and E2704. Y2706 contributes to the S-adenosyl-L-methionine binding site. Zn(2+) contacts are provided by E2925, H2929, C2934, and C2937. In terms of domain architecture, RdRp catalytic spans 3016–3166; sequence LMYADDTAGW…PLDERFGTSL (151 aa). Zn(2+) contacts are provided by H3200, C3216, and C3335.

It in the N-terminal section; belongs to the class I-like SAM-binding methyltransferase superfamily. mRNA cap 0-1 NS5-type methyltransferase family. In terms of assembly, homodimer. Interacts (via N-terminus) with host EXOC1 (via C-terminus); this interaction results in EXOC1 degradation through the proteasome degradation pathway. Forms heterodimers with envelope protein E in the endoplasmic reticulum and Golgi. As to quaternary structure, homodimer; in the endoplasmic reticulum and Golgi. Interacts with protein prM. Interacts with non-structural protein 1. In terms of assembly, homodimer; Homohexamer when secreted. Interacts with envelope protein E. Interacts (via N-terminus) with serine protease NS3. As to quaternary structure, forms a heterodimer with serine protease NS3. May form homooligomers. In terms of assembly, forms a heterodimer with NS2B. Interacts with NS4B. Interacts with unphosphorylated RNA-directed RNA polymerase NS5; this interaction stimulates RNA-directed RNA polymerase NS5 guanylyltransferase activity. Interacts with host SHFL. Interacts with host MAVS; this interaction inhibits the synthesis of IFN-beta. Interacts with host SHFL. Interacts with host AUP1; the interaction occurs in the presence of Dengue virus NS4B and induces lipophagy which facilitates production of virus progeny particles. As to quaternary structure, interacts with serine protease NS3. In terms of assembly, homodimer. Interacts with host STAT2; this interaction inhibits the phosphorylation of the latter, and, when all viral proteins are present (polyprotein), targets STAT2 for degradation. Interacts with serine protease NS3. Interacts with host PAF1 complex; the interaction may prevent the recruitment of the PAF1 complex to interferon-responsive genes, and thus reduces the immune response. In terms of processing, specific enzymatic cleavages in vivo yield mature proteins. Cleavages in the lumen of endoplasmic reticulum are performed by host signal peptidase, whereas cleavages in the cytoplasmic side are performed by serine protease NS3. Signal cleavage at the 2K-4B site requires a prior NS3 protease-mediated cleavage at the 4A-2K site. Cleaved in post-Golgi vesicles by a host furin, releasing the mature small envelope protein M, and peptide pr. This cleavage is incomplete as up to 30% of viral particles still carry uncleaved prM. Post-translationally, N-glycosylated. In terms of processing, N-glycosylated. The excreted form is glycosylated and this is required for efficient secretion of the protein from infected cells. Acetylated by host KAT5. Acetylation modulates NS3 RNA-binding and unwinding activities and plays an important positive role for viral replication. Post-translationally, sumoylation of RNA-directed RNA polymerase NS5 increases NS5 protein stability allowing proper viral RNA replication. In terms of processing, phosphorylated on serines residues. This phosphorylation may trigger NS5 nuclear localization.

The protein resides in the virion. The protein localises to the host nucleus. Its subcellular location is the host cytoplasm. It is found in the host perinuclear region. It localises to the secreted. The protein resides in the virion membrane. The protein localises to the host endoplasmic reticulum membrane. Its subcellular location is the host mitochondrion. The catalysed reaction is Selective hydrolysis of -Xaa-Xaa-|-Yaa- bonds in which each of the Xaa can be either Arg or Lys and Yaa can be either Ser or Ala.. It catalyses the reaction RNA(n) + a ribonucleoside 5'-triphosphate = RNA(n+1) + diphosphate. The enzyme catalyses a ribonucleoside 5'-triphosphate + H2O = a ribonucleoside 5'-diphosphate + phosphate + H(+). It carries out the reaction ATP + H2O = ADP + phosphate + H(+). The catalysed reaction is a 5'-end (5'-triphosphoguanosine)-ribonucleoside in mRNA + S-adenosyl-L-methionine = a 5'-end (N(7)-methyl 5'-triphosphoguanosine)-ribonucleoside in mRNA + S-adenosyl-L-homocysteine. It catalyses the reaction a 5'-end (N(7)-methyl 5'-triphosphoguanosine)-ribonucleoside in mRNA + S-adenosyl-L-methionine = a 5'-end (N(7)-methyl 5'-triphosphoguanosine)-(2'-O-methyl-ribonucleoside) in mRNA + S-adenosyl-L-homocysteine + H(+). Plays a role in virus budding by binding to the cell membrane and gathering the viral RNA into a nucleocapsid that forms the core of a mature virus particle. During virus entry, may induce genome penetration into the host cytoplasm after hemifusion induced by the surface proteins. Can migrate to the cell nucleus where it modulates host functions. Overcomes the anti-viral effects of host EXOC1 by sequestering and degrading the latter through the proteasome degradation pathway. In terms of biological role, regulates the ATPase activity of the NS3 helicase activity. NS4A allows NS3 helicase to conserve energy during unwinding. Plays a role in the inhibition of the host innate immune response. Interacts with host MAVS and thereby prevents the interaction between RIGI and MAVS. In turn, IFN-beta production is impaired. Interacts with host AUP1 which mediates induction of lipophagy in host cells and facilitates production of virus progeny particles. Its function is as follows. Inhibits RNA silencing by interfering with host Dicer. Functionally, prevents premature fusion activity of envelope proteins in trans-Golgi by binding to envelope protein E at pH6.0. After virion release in extracellular space, gets dissociated from E dimers. Acts as a chaperone for envelope protein E during intracellular virion assembly by masking and inactivating envelope protein E fusion peptide. prM is the only viral peptide matured by host furin in the trans-Golgi network probably to avoid catastrophic activation of the viral fusion activity in acidic Golgi compartment prior to virion release. prM-E cleavage is inefficient, and many virions are only partially matured. These uncleaved prM would play a role in immune evasion. In terms of biological role, may play a role in virus budding. Exerts cytotoxic effects by activating a mitochondrial apoptotic pathway through M ectodomain. May display a viroporin activity. Its function is as follows. Binds to host cell surface receptor and mediates fusion between viral and cellular membranes. Envelope protein is synthesized in the endoplasmic reticulum in the form of heterodimer with protein prM. They play a role in virion budding in the ER, and the newly formed immature particle is covered with 60 spikes composed of heterodimer between precursor prM and envelope protein E. The virion is transported to the Golgi apparatus where the low pH causes dissociation of PrM-E heterodimers and formation of E homodimers. prM-E cleavage is inefficient, and many virions are only partially matured. These uncleaved prM would play a role in immune evasion. Functionally, involved in immune evasion, pathogenesis and viral replication. Once cleaved off the polyprotein, is targeted to three destinations: the viral replication cycle, the plasma membrane and the extracellular compartment. Essential for viral replication. Required for formation of the replication complex and recruitment of other non-structural proteins to the ER-derived membrane structures. Excreted as a hexameric lipoparticle that plays a role against host immune response. Antagonizing the complement function. Binds to the host macrophages and dendritic cells. Inhibits signal transduction originating from Toll-like receptor 3 (TLR3). Disrupts the host endothelial glycocalyx layer of host pulmonary microvascular endothelial cells, inducing degradation of sialic acid and shedding of heparan sulfate proteoglycans. NS1 induces expression of sialidases, heparanase, and activates cathepsin L, which activates heparanase via enzymatic cleavage. These effects are probably linked to the endothelial hyperpermeability observed in severe dengue disease. In terms of biological role, component of the viral RNA replication complex that functions in virion assembly and antagonizes the host immune response. Its function is as follows. Required cofactor for the serine protease function of NS3. May have membrane-destabilizing activity and form viroporins. Functionally, displays three enzymatic activities: serine protease, NTPase and RNA helicase. NS3 serine protease, in association with NS2B, performs its autocleavage and cleaves the polyprotein at dibasic sites in the cytoplasm: C-prM, NS2A-NS2B, NS2B-NS3, NS3-NS4A, NS4A-2K and NS4B-NS5. NS3 RNA helicase binds RNA and unwinds dsRNA in the 3' to 5' direction. Functions as a signal peptide for NS4B and is required for the interferon antagonism activity of the latter. In terms of biological role, induces the formation of ER-derived membrane vesicles where the viral replication takes place. Inhibits interferon (IFN)-induced host STAT1 phosphorylation and nuclear translocation, thereby preventing the establishment of cellular antiviral state by blocking the IFN-alpha/beta pathway. Its function is as follows. Replicates the viral (+) and (-) RNA genome, and performs the capping of genomes in the cytoplasm. NS5 methylates viral RNA cap at guanine N-7 and ribose 2'-O positions. Besides its role in RNA genome replication, also prevents the establishment of cellular antiviral state by blocking the interferon-alpha/beta (IFN-alpha/beta) signaling pathway. Inhibits host TYK2 and STAT2 phosphorylation, thereby preventing activation of JAK-STAT signaling pathway. May reduce immune responses by preventing the recruitment of the host PAF1 complex to interferon-responsive genes. The polypeptide is Genome polyprotein (Dengue virus type 4 (strain Dominica/814669/1981) (DENV-4)).